The sequence spans 557 residues: IgE-binding protein (557 aa).

The tract at residues 113-172 (DGLGKPALSSSEAGEESSSEETDWEEEAAHYQPANWSRKKPKAAGEGQFADWPQGSRLQG) is disordered. The segment covering 125 to 138 (AGEESSSEETDWEE) has biased composition (acidic residues). Residues 344 to 534 (TAIRPGRRSR…TAAERHVQSQ (191 aa)) form the Integrase catalytic domain.

The sequence is that of IgE-binding protein (Iap) from Mus musculus (Mouse).